A 123-amino-acid chain; its full sequence is Small ribosomal subunit protein uS17 (123 aa).

The protein belongs to the universal ribosomal protein uS17 family. Part of the 30S ribosomal subunit.

In terms of biological role, one of the primary rRNA binding proteins, it binds specifically to the 5'-end of 16S ribosomal RNA. The protein is Small ribosomal subunit protein uS17 of Pyrobaculum aerophilum (strain ATCC 51768 / DSM 7523 / JCM 9630 / CIP 104966 / NBRC 100827 / IM2).